A 368-amino-acid polypeptide reads, in one-letter code: MKTTAAVLFEAGKPFELMELDLDGPGPGEVLVKYTAAGLCHSDLHLTDGDLPPRFPIVGGHEGSGVIEEVGAGVTRVKPGDHVVCSFIPNCGTCRYCCTGRQNLCDMGATILEGCMPDGSFRFHSQGTDFGAMCMLGTFAERATVSQHSVVKVDDWLPLETAVLVGCGVPSGWGTAVNAGNLRAGDTAVIYGVGGLGINAVQGATAAGCKYVVVVDPVAFKRETALKFGATHAFADAASAAAKVDELTWGQGADAALILVGTVDDEVVSAATAVIGKGGTVVITGLADPAKLTVHVSGTDLTLHEKTIKGSLFGSCNPQYDIVRLLRLYDAGQLMLDELVTTTYNLEQVNQGYQDLRDGKNIRGVIVH.

Zn(2+) is bound by residues cysteine 40, histidine 61, cysteine 91, cysteine 94, cysteine 97, cysteine 105, and cysteine 167.

The protein belongs to the zinc-containing alcohol dehydrogenase family. Zn(2+) is required as a cofactor.

It catalyses the reaction a primary alcohol + NAD(+) = an aldehyde + NADH + H(+). The enzyme catalyses a secondary alcohol + NAD(+) = a ketone + NADH + H(+). Its function is as follows. Required for maintaining the appropriate mycolic acid composition and permeability of the envelope on its exposure to acidic pH. The sequence is that of Putative alcohol dehydrogenase D (adhD) from Mycobacterium tuberculosis (strain CDC 1551 / Oshkosh).